We begin with the raw amino-acid sequence, 229 residues long: Response regulator SaeR (229 aa).

The region spanning 3–116 (HLLIVDDEKD…ELVLRTNNLL (114 aa)) is the Response regulatory domain. Residue Asp-51 is modified to 4-aspartylphosphate. The segment at residues 128 to 227 (IEQLEFDGLV…VWGLGYKFER (100 aa)) is a DNA-binding region (ompR/PhoB-type).

Post-translationally, phosphorylated by SaeS.

Its subcellular location is the cytoplasm. In terms of biological role, member of the two-component regulatory system SaeR/SaeS. Probably functions as a transcriptional regulator via a specific DNA-binding domain, recognizing motifs near the promoter sequences of target genes. In Staphylococcus epidermidis (strain ATCC 35984 / DSM 28319 / BCRC 17069 / CCUG 31568 / BM 3577 / RP62A), this protein is Response regulator SaeR (saeR).